The chain runs to 81 residues: Photosystem I iron-sulfur center (81 aa).

2 4Fe-4S ferredoxin-type domains span residues 1–31 and 39–68; these read MSHK…MVPW and IASS…IRVY. Residues C11, C14, C17, C21, C48, C51, C54, and C58 each coordinate [4Fe-4S] cluster.

The cyanobacterial PSI reaction center is composed of one copy each of PsaA,B,C,D,E,F,I,J,K,L,M and X, and forms trimeric complexes. [4Fe-4S] cluster is required as a cofactor.

It is found in the cellular thylakoid membrane. The catalysed reaction is reduced [plastocyanin] + hnu + oxidized [2Fe-2S]-[ferredoxin] = oxidized [plastocyanin] + reduced [2Fe-2S]-[ferredoxin]. Its function is as follows. Apoprotein for the two 4Fe-4S centers FA and FB of photosystem I (PSI); essential for photochemical activity. FB is the terminal electron acceptor of PSI, donating electrons to ferredoxin. The C-terminus interacts with PsaA/B/D and helps assemble the protein into the PSI complex. Required for binding of PsaD and PsaE to PSI. PSI is a plastocyanin/cytochrome c6-ferredoxin oxidoreductase, converting photonic excitation into a charge separation, which transfers an electron from the donor P700 chlorophyll pair to the spectroscopically characterized acceptors A0, A1, FX, FA and FB in turn. This Crocosphaera subtropica (strain ATCC 51142 / BH68) (Cyanothece sp. (strain ATCC 51142)) protein is Photosystem I iron-sulfur center.